The primary structure comprises 224 residues: 2-C-methyl-D-erythritol 4-phosphate cytidylyltransferase (224 aa).

This sequence belongs to the IspD/TarI cytidylyltransferase family. IspD subfamily.

It carries out the reaction 2-C-methyl-D-erythritol 4-phosphate + CTP + H(+) = 4-CDP-2-C-methyl-D-erythritol + diphosphate. It functions in the pathway isoprenoid biosynthesis; isopentenyl diphosphate biosynthesis via DXP pathway; isopentenyl diphosphate from 1-deoxy-D-xylulose 5-phosphate: step 2/6. In terms of biological role, catalyzes the formation of 4-diphosphocytidyl-2-C-methyl-D-erythritol from CTP and 2-C-methyl-D-erythritol 4-phosphate (MEP). This Caldicellulosiruptor bescii (strain ATCC BAA-1888 / DSM 6725 / KCTC 15123 / Z-1320) (Anaerocellum thermophilum) protein is 2-C-methyl-D-erythritol 4-phosphate cytidylyltransferase.